The chain runs to 380 residues: Cytochrome b (380 aa).

Transmembrane regions (helical) follow at residues 34–54 (FGSL…FLAM), 78–99 (WLLR…YMHI), 114–134 (WNIG…GYVL), and 179–199 (FFAF…VHLL). Positions 84 and 98 each coordinate heme b. Heme b is bound by residues His-183 and His-197. Position 202 (His-202) interacts with a ubiquinone. 4 helical membrane passes run 227–247 (YKDV…ALFS), 289–309 (LGGV…PFVH), 321–341 (LAQV…WLGG), and 348–368 (YIFL…LFIP).

The protein belongs to the cytochrome b family. In terms of assembly, the cytochrome bc1 complex contains 3 respiratory subunits (MT-CYB, CYC1 and UQCRFS1), 2 core proteins (UQCRC1 and UQCRC2) and probably 6 low-molecular weight proteins. Requires heme b as cofactor.

The protein resides in the mitochondrion inner membrane. Functionally, component of the ubiquinol-cytochrome c reductase complex (complex III or cytochrome b-c1 complex) that is part of the mitochondrial respiratory chain. The b-c1 complex mediates electron transfer from ubiquinol to cytochrome c. Contributes to the generation of a proton gradient across the mitochondrial membrane that is then used for ATP synthesis. The protein is Cytochrome b (MT-CYB) of Branchiostoma lanceolatum (Common lancelet).